Here is a 194-residue protein sequence, read N- to C-terminus: Holliday junction branch migration complex subunit RuvA (194 aa).

The segment at 1–64 is domain I; it reads MISRLTGKLV…EDAHLLFGFA (64 aa). The domain II stretch occupies residues 65-143; it reads TAEERKTFRQ…AHAVTDGLFA (79 aa). The interval 144–147 is flexible linker; that stretch reads AAPA. A domain III region spans residues 147-194; the sequence is AADETEDIVGTLLALGYSEREAKAAVKGVPKGTDVGEGVRLALKNLLK.

The protein belongs to the RuvA family. As to quaternary structure, homotetramer. Forms an RuvA(8)-RuvB(12)-Holliday junction (HJ) complex. HJ DNA is sandwiched between 2 RuvA tetramers; dsDNA enters through RuvA and exits via RuvB. An RuvB hexamer assembles on each DNA strand where it exits the tetramer. Each RuvB hexamer is contacted by two RuvA subunits (via domain III) on 2 adjacent RuvB subunits; this complex drives branch migration. In the full resolvosome a probable DNA-RuvA(4)-RuvB(12)-RuvC(2) complex forms which resolves the HJ.

It is found in the cytoplasm. The RuvA-RuvB-RuvC complex processes Holliday junction (HJ) DNA during genetic recombination and DNA repair, while the RuvA-RuvB complex plays an important role in the rescue of blocked DNA replication forks via replication fork reversal (RFR). RuvA specifically binds to HJ cruciform DNA, conferring on it an open structure. The RuvB hexamer acts as an ATP-dependent pump, pulling dsDNA into and through the RuvAB complex. HJ branch migration allows RuvC to scan DNA until it finds its consensus sequence, where it cleaves and resolves the cruciform DNA. The chain is Holliday junction branch migration complex subunit RuvA from Neisseria meningitidis serogroup C / serotype 2a (strain ATCC 700532 / DSM 15464 / FAM18).